Here is a 94-residue protein sequence, read N- to C-terminus: Integration host factor subunit beta (94 aa).

This sequence belongs to the bacterial histone-like protein family. In terms of assembly, heterodimer of an alpha and a beta chain.

In terms of biological role, this protein is one of the two subunits of integration host factor, a specific DNA-binding protein that functions in genetic recombination as well as in transcriptional and translational control. The protein is Integration host factor subunit beta (ihfB) of Haemophilus influenzae (strain ATCC 51907 / DSM 11121 / KW20 / Rd).